The following is a 417-amino-acid chain: Gamma-glutamyl phosphate reductase (417 aa).

It belongs to the gamma-glutamyl phosphate reductase family.

The protein resides in the cytoplasm. The catalysed reaction is L-glutamate 5-semialdehyde + phosphate + NADP(+) = L-glutamyl 5-phosphate + NADPH + H(+). The protein operates within amino-acid biosynthesis; L-proline biosynthesis; L-glutamate 5-semialdehyde from L-glutamate: step 2/2. Its function is as follows. Catalyzes the NADPH-dependent reduction of L-glutamate 5-phosphate into L-glutamate 5-semialdehyde and phosphate. The product spontaneously undergoes cyclization to form 1-pyrroline-5-carboxylate. The protein is Gamma-glutamyl phosphate reductase of Haemophilus influenzae (strain PittGG).